Reading from the N-terminus, the 444-residue chain is ATP-dependent protease ATPase subunit HslU (444 aa).

ATP-binding positions include Ile18, 60-65, Asp256, Glu322, and Arg394; that span reads GVGKTE.

Belongs to the ClpX chaperone family. HslU subfamily. As to quaternary structure, a double ring-shaped homohexamer of HslV is capped on each side by a ring-shaped HslU homohexamer. The assembly of the HslU/HslV complex is dependent on binding of ATP.

It is found in the cytoplasm. ATPase subunit of a proteasome-like degradation complex; this subunit has chaperone activity. The binding of ATP and its subsequent hydrolysis by HslU are essential for unfolding of protein substrates subsequently hydrolyzed by HslV. HslU recognizes the N-terminal part of its protein substrates and unfolds these before they are guided to HslV for hydrolysis. In Serratia proteamaculans (strain 568), this protein is ATP-dependent protease ATPase subunit HslU.